Reading from the N-terminus, the 312-residue chain is Putative S-adenosyl-L-methionine-dependent methyltransferase Mkms_0097 (312 aa).

S-adenosyl-L-methionine-binding positions include Asp134 and 163–164 (DL).

It belongs to the UPF0677 family.

Exhibits S-adenosyl-L-methionine-dependent methyltransferase activity. In Mycobacterium sp. (strain KMS), this protein is Putative S-adenosyl-L-methionine-dependent methyltransferase Mkms_0097.